The following is a 211-amino-acid chain: Putative hydrolase SMU_367 (211 aa).

The N-terminal stretch at 1 to 29 (MKKQFLEKAVFTVAATAATVVLGNKMADA) is a signal peptide. The LysM domain maps to 30–74 (DTYTLQEGDSFFSVAQRYHMDAYELASMNGKDITSLILPGQTLTV). A disordered region spans residues 77 to 101 (SAAPDNQAAAPTDTTQATTETNDAN). Over residues 78–101 (AAPDNQAAAPTDTTQATTETNDAN) the composition is skewed to low complexity. The 125-residue stretch at 85-209 (AAPTDTTQAT…GTPGSVSYIY (125 aa)) folds into the Peptidase C51 domain.

This chain is Putative hydrolase SMU_367, found in Streptococcus mutans serotype c (strain ATCC 700610 / UA159).